A 253-amino-acid polypeptide reads, in one-letter code: uncharacterized protein (253 aa).

The region spanning 4–73 (FGKSTADRVK…IDVSGVTVLQ (70 aa)) is the BON 1 domain. The span at 79–93 (AAQTAPTTPAQTSPS) shows a compositional bias: low complexity. Positions 79–105 (AAQTAPTTPAQTSPSVQDSPSTPVQMP) are disordered. The BON 2 domain maps to 119–188 (DTSRIAKAVL…VDISGLRVAQ (70 aa)). The LysM domain occupies 204–251 (TVYTVKPGDSLSKIAEHYYGDQMEYKKIAHYNNISNPDLIQPGQKLRI).

This is an uncharacterized protein from Deinococcus radiodurans (strain ATCC 13939 / DSM 20539 / JCM 16871 / CCUG 27074 / LMG 4051 / NBRC 15346 / NCIMB 9279 / VKM B-1422 / R1).